Consider the following 718-residue polypeptide: MEDLGENTMVLSTLRSLNNFISQRVEGGSGLDISTSAPGSLQMQYQQSMQLEERAEQIRSKSHLIQVEREKMQMELSHKRARVELERAASTSARNYEREVDRNQELLTRIRQLQEREAGAEEKMQEQLERNRQCQQNLDAASKRLREKEDSLAQAGETINALKGRISELQWSVMDQEMRVKRLESEKQELQEQLDLQHKKCQEANQKIQELQASQEARADHEQQIKDLEQKLSLQEQDAAIVKNMKSELVRLPRLERELKQLREESAHLREMRETNGLLQEELEGLQRKLGRQEKMQETLVGLELENERLLAKLQSWERLDQTMGLSIRTPEDLSRFVVELQQRELALKDKNSAVTSSARGLEKARQQLQEELRQVSGQLLEERKKRETHEALARRLQKRVLLLTKERDGMRAILGSYDSELTPAEYSPQLTRRMREAEDMVQKVHSHSAEMEAQLSQALEELGGQKQRADMLEMELKMLKSQSSSAEQSFLFSREEADTLRLKVEELEGERSRLEEEKRMLEAQLERRALQGDYDQSRTKVLHMSLNPTSVARQRLREDHSQLQAECERLRGLLRAMERGGTVPADLEAAAASLPSSKEVAELKKQVESAELKNQRLKEVFQTKIQEFRKACYTLTGYQIDITTENQYRLTSLYAEHPGDCLIFKATSPSGSKMQLLETEFSHTVGELIEVHLRRQDSIPAFLSSLTLELFSRQTVA.

The residue at position 1 (Met-1) is an N-acetylmethionine. Position 16 is a phosphoserine (Ser-16). Residues 46-632 adopt a coiled-coil conformation; it reads QQSMQLEERA…QTKIQEFRKA (587 aa). N6-acetyllysine; alternate is present on Lys-61. Residue Lys-61 forms a Glycyl lysine isopeptide (Lys-Gly) (interchain with G-Cter in SUMO2); alternate linkage. Positions 79 to 82 match the Nuclear localization signal motif; that stretch reads KRAR. Ser-214 is modified (phosphoserine). An important for interaction with IK region spans residues 301 to 340; that stretch reads VGLELENERLLAKLQSWERLDQTMGLSIRTPEDLSRFVVE. Positions 380-532 are necessary for interaction with NEK2; sequence LLEERKKRET…EAQLERRALQ (153 aa). The residue at position 428 (Ser-428) is a Phosphoserine. The important for interaction with IK stretch occupies residues 439-480; the sequence is EDMVQKVHSHSAEMEAQLSQALEELGGQKQRADMLEMELKML. The tract at residues 540 to 551 is necessary for interaction with MAD2L1; sequence TKVLHMSLNPTS. 2 positions are modified to phosphoserine: Ser-598 and Ser-610. Residue Tyr-634 is modified to Phosphotyrosine. The residue at position 716 (Thr-716) is a Phosphothreonine.

The protein belongs to the MAD1 family. Homodimer. Dimerizes via its N- and C- terminal regions. Heterodimerizes with MAD2L1 in order to form a tetrameric MAD1L1-MAD2L1 core complex. Interacts with the closed conformation form of MAD2L1 (C-MAD2) and open conformation form of MAD2L1 (O-MAD2). It is unclear whether MAD1L1 dimerization promotes the conversion of closed to open conformation of MAD2L1. Formation of a heterotetrameric core complex containing two molecules each of MAD1L1 and of MAD2L1 promotes binding of another molecule of MAD2L1 to each MAD2L1, resulting in a heterohexamer. Perturbation of the original MAD1L1-MAD2L1 structure by the spindle checkpoint may decrease MAD2L1 affinity for MAD1L1. CDC20 can compete with MAD1L1 for MAD2L1 binding, until the attachment and/or tension dampen the checkpoint signal, preventing further release of MAD2L1 on to CDC20. Also able to interact with the BUB1/BUB3 complex. Interacts with NEK2. Interacts with TTK. Interacts with TPR; the interactions occurs in a microtubule-independent manner. Interacts with IK. Interacts with the viral Tax protein. Interacts with PRAP1. In terms of assembly, interacts with MAD2L1; this interaction leads to the cytoplasmic sequestration of MAD2L1. Interacts with PRAP1. Phosphorylated; by BUB1. Become hyperphosphorylated in late S through M phases or after mitotic spindle damage. Phosphorylated; by TTK. As to expression, expressed in hepatocellular carcinomas and hepatoma cell lines (at protein level).

Its subcellular location is the nucleus. It localises to the chromosome. The protein localises to the centromere. It is found in the kinetochore. The protein resides in the nucleus envelope. Its subcellular location is the cytoplasm. It localises to the cytoskeleton. The protein localises to the microtubule organizing center. It is found in the centrosome. The protein resides in the spindle. Its subcellular location is the spindle pole. Component of the spindle-assembly checkpoint that prevents the onset of anaphase until all chromosomes are properly aligned at the metaphase plate. Forms a heterotetrameric complex with the closed conformation form of MAD2L1 (C-MAD2) at unattached kinetochores during prometaphase, recruits an open conformation of MAD2L1 (O-MAD2) and promotes the conversion of O-MAD2 to C-MAD2, which ensures mitotic checkpoint signaling. Functionally, sequesters MAD2L1 in the cytoplasm preventing its function as an activator of the mitotic spindle assembly checkpoint (SAC) resulting in SAC impairment and chromosomal instability in hepatocellular carcinomas. The chain is Mitotic spindle assembly checkpoint protein MAD1 (MAD1L1) from Homo sapiens (Human).